The following is a 2226-amino-acid chain: DNA polymerase epsilon catalytic subunit A (2226 aa).

Residues 1240-1265 form a disordered region; it reads RVSKVTSRKRRNGKANNVSDSEEEER. The Zn(2+) site is built by cysteine 2112, cysteine 2115, cysteine 2134, and cysteine 2137. The CysA-type zinc-finger motif lies at 2112–2137; sequence CDYCNYIRDIDFCRDEQKNIWNCSNC. [4Fe-4S] cluster contacts are provided by cysteine 2168, cysteine 2171, cysteine 2183, and cysteine 2185. The CysB motif signature appears at 2168–2185; it reads CSKCHQIKSDNMSEYCKC.

This sequence belongs to the DNA polymerase type-B family. As to quaternary structure, heterotetramer. Consists of 4 subunits: POL2, DPB2, DPB3 and DPB4. Requires [4Fe-4S] cluster as cofactor.

The protein localises to the nucleus. It catalyses the reaction DNA(n) + a 2'-deoxyribonucleoside 5'-triphosphate = DNA(n+1) + diphosphate. Its function is as follows. DNA polymerase II participates in chromosomal DNA replication. The chain is DNA polymerase epsilon catalytic subunit A (POL2) from Debaryomyces hansenii (strain ATCC 36239 / CBS 767 / BCRC 21394 / JCM 1990 / NBRC 0083 / IGC 2968) (Yeast).